Consider the following 391-residue polypeptide: E3 ubiquitin-protein ligase RMND5A (391 aa).

In terms of domain architecture, LisH spans 114–146 (SQQILSEVMVEHFFRQGMLDVAEELCQEAGLSI). In terms of domain architecture, CTLH spans 153–210 (PFVELNRILEALKVRVLRPALEWAVSNREMLMAQNSSLEFKLHRLYFISLLMGGTVNQ). Residues 336–377 (CPILRQQTTDNNPPMKLVCGHIISRDALNKMFNGSKLKCPYC) form an RING-Gid-type zinc finger.

As to quaternary structure, identified in the CTLH complex that contains at least RANBP9, MKLN1, MAEA, RMND5A, GID8 and ARMC8.

The protein localises to the nucleus. The protein resides in the nucleoplasm. It is found in the cytoplasm. It catalyses the reaction S-ubiquitinyl-[E2 ubiquitin-conjugating enzyme]-L-cysteine + [acceptor protein]-L-lysine = [E2 ubiquitin-conjugating enzyme]-L-cysteine + N(6)-ubiquitinyl-[acceptor protein]-L-lysine.. Functionally, E3 ubiquitin-protein ligase component of the CTLH complex. The chain is E3 ubiquitin-protein ligase RMND5A (rmnd5a) from Xenopus tropicalis (Western clawed frog).